The primary structure comprises 914 residues: Linoleate 13S-lipoxygenase 3-1, chloroplastic (914 aa).

The N-terminal 83 residues, 1–83 (MALAKEIMGI…PEKAVRFKVR (83 aa)), are a transit peptide targeting the chloroplast. A PLAT domain is found at 96–218 (LKETIVKHLD…DHPGKRIFFS (123 aa)). The region spanning 221–914 (PYLPDETPAG…CRGVPNSVSI (694 aa)) is the Lipoxygenase domain. Residues His-574, His-579, His-765, Asn-769, and Ile-914 each contribute to the Fe cation site.

This sequence belongs to the lipoxygenase family. As to quaternary structure, monomer. Requires Fe cation as cofactor. In terms of tissue distribution, expressed in roots and leaves. Detected in tubers and flower buds.

The protein resides in the plastid. It is found in the chloroplast stroma. Its subcellular location is the chloroplast thylakoid. It catalyses the reaction (9Z,12Z)-octadecadienoate + O2 = (13S)-hydroperoxy-(9Z,11E)-octadecadienoate. It carries out the reaction (9Z,12Z,15Z)-octadecatrienoate + O2 = (13S)-hydroperoxy-(9Z,11E,15Z)-octadecatrienoate. It functions in the pathway lipid metabolism; oxylipin biosynthesis. Its function is as follows. Plant lipoxygenases may be involved in a number of diverse aspects of plant physiology including growth and development, pest resistance, and senescence or responses to wounding. Required for the regulation of wound-induced gene expression, but is not involved in the bulk production of jasmonate upon wounding. Catalyzes the hydroperoxidation of lipids containing a cis,cis-1,4-pentadiene structure. Linolenic acid is the preferred substrate, before linoleic and arachidonic acids. In Solanum tuberosum (Potato), this protein is Linoleate 13S-lipoxygenase 3-1, chloroplastic (LOX3.1).